The primary structure comprises 888 residues: Alanine--tRNA ligase (888 aa).

Residues His570, His574, Cys673, and His677 each contribute to the Zn(2+) site.

This sequence belongs to the class-II aminoacyl-tRNA synthetase family. The cofactor is Zn(2+).

The protein resides in the cytoplasm. It catalyses the reaction tRNA(Ala) + L-alanine + ATP = L-alanyl-tRNA(Ala) + AMP + diphosphate. Functionally, catalyzes the attachment of alanine to tRNA(Ala) in a two-step reaction: alanine is first activated by ATP to form Ala-AMP and then transferred to the acceptor end of tRNA(Ala). Also edits incorrectly charged Ser-tRNA(Ala) and Gly-tRNA(Ala) via its editing domain. This is Alanine--tRNA ligase from Chlorobium phaeobacteroides (strain DSM 266 / SMG 266 / 2430).